The sequence spans 519 residues: 2-isopropylmalate synthase (519 aa).

Residues 5–267 form the Pyruvate carboxyltransferase domain; sequence VVIFDTTLRD…STNINYKEIY (263 aa). Residues D14, H202, H204, and N238 each coordinate Mn(2+). Positions 392–519 are regulatory domain; it reads SLKFFSVQSI…LKILKDFKKK (128 aa).

The protein belongs to the alpha-IPM synthase/homocitrate synthase family. LeuA type 1 subfamily. Homodimer. Requires Mn(2+) as cofactor.

The protein resides in the cytoplasm. The catalysed reaction is 3-methyl-2-oxobutanoate + acetyl-CoA + H2O = (2S)-2-isopropylmalate + CoA + H(+). The protein operates within amino-acid biosynthesis; L-leucine biosynthesis; L-leucine from 3-methyl-2-oxobutanoate: step 1/4. Functionally, catalyzes the condensation of the acetyl group of acetyl-CoA with 3-methyl-2-oxobutanoate (2-ketoisovalerate) to form 3-carboxy-3-hydroxy-4-methylpentanoate (2-isopropylmalate). The sequence is that of 2-isopropylmalate synthase from Buchnera aphidicola subsp. Acyrthosiphon pisum (strain APS) (Acyrthosiphon pisum symbiotic bacterium).